Reading from the N-terminus, the 298-residue chain is 5,10-methylenetetrahydrofolate reductase (298 aa).

Glu-28 acts as the Proton donor/acceptor in catalysis. Residue Thr-59 coordinates NADH. The FAD site is built by Tyr-60, Ala-62, His-88, Arg-118, Gly-119, Asp-120, Ala-132, Tyr-152, His-156, Ala-159, Asp-165, Asn-168, and Lys-172. (6S)-5-methyl-5,6,7,8-tetrahydrofolate is bound at residue Asp-120. An NADH-binding site is contributed by Gln-183. Residues Gln-183, Gln-219, and Arg-279 each contribute to the (6S)-5-methyl-5,6,7,8-tetrahydrofolate site.

This sequence belongs to the methylenetetrahydrofolate reductase family. The cofactor is FAD.

It catalyses the reaction (6S)-5-methyl-5,6,7,8-tetrahydrofolate + NAD(+) = (6R)-5,10-methylene-5,6,7,8-tetrahydrofolate + NADH + H(+). It participates in one-carbon metabolism; tetrahydrofolate interconversion. It functions in the pathway amino-acid biosynthesis; L-methionine biosynthesis via de novo pathway. Catalyzes the NADH-dependent reduction of 5,10-methylenetetrahydrofolate to 5-methyltetrahydrofolate. Is required to provide the methyl group necessary for methionine synthetase to convert homocysteine to methionine; the methyl group is given by 5-methyltetrahydrofolate. The polypeptide is 5,10-methylenetetrahydrofolate reductase (metF) (Pectobacterium carotovorum subsp. carotovorum (Erwinia carotovora subsp. carotovora)).